The primary structure comprises 496 residues: Aldehyde dehydrogenase 1A1 (496 aa).

Lysine 86 and lysine 123 each carry N6-acetyllysine. NAD(+) contacts are provided by residues 162–165 (IPWN), 188–191 (KPAE), 221–222 (GP), and 241–242 (GS). Lysine 247 is modified (N6-acetyllysine). Residue glutamate 264 is the Proton acceptor of the active site. 264–266 (ELG) is an NAD(+) binding site. Cysteine 298 serves as the catalytic Nucleophile. A mediates interaction with PRMT3 region spans residues 331–496 (LAPEVNQGPQ…VTVKISQKNS (166 aa)). 344–348 (EQYNK) contributes to the NAD(+) binding site. An N6-acetyllysine mark is found at lysine 348 and lysine 362. 395–397 (EIF) is an NAD(+) binding site. Lysine 405 carries the N6-acetyllysine modification. Serine 408 carries the phosphoserine modification. N6-acetyllysine occurs at positions 414, 430, and 490.

It belongs to the aldehyde dehydrogenase family. Homotetramer. Interacts with PRMT3; the interaction is direct, inhibits ALDH1A1 aldehyde dehydrogenase activity and is independent of the methyltransferase activity of PRMT3. Post-translationally, the N-terminus is blocked most probably by acetylation.

It is found in the cytoplasm. It localises to the cytosol. The protein resides in the cell projection. The protein localises to the axon. It carries out the reaction an aldehyde + NAD(+) + H2O = a carboxylate + NADH + 2 H(+). The enzyme catalyses all-trans-retinal + NAD(+) + H2O = all-trans-retinoate + NADH + 2 H(+). The catalysed reaction is 9-cis-retinal + NAD(+) + H2O = 9-cis-retinoate + NADH + 2 H(+). It catalyses the reaction 11-cis-retinal + NAD(+) + H2O = 11-cis-retinoate + NADH + 2 H(+). It carries out the reaction 13-cis-retinal + NAD(+) + H2O = 13-cis-retinoate + NADH + 2 H(+). The enzyme catalyses (E)-4-hydroxynon-2-enal + NAD(+) + H2O = (E)-4-hydroxynon-2-enoate + NADH + 2 H(+). The catalysed reaction is malonaldehyde + NAD(+) + H2O = 3-oxopropanoate + NADH + 2 H(+). It catalyses the reaction hexanal + NAD(+) + H2O = hexanoate + NADH + 2 H(+). It carries out the reaction propanal + NAD(+) + H2O = propanoate + NADH + 2 H(+). The enzyme catalyses 3-deoxyglucosone + NAD(+) + H2O = 2-dehydro-3-deoxy-D-gluconate + NADH + 2 H(+). The catalysed reaction is acetaldehyde + NAD(+) + H2O = acetate + NADH + 2 H(+). It catalyses the reaction benzaldehyde + NAD(+) + H2O = benzoate + NADH + 2 H(+). It carries out the reaction 4-aminobutanal + NAD(+) + H2O = 4-aminobutanoate + NADH + 2 H(+). Its pathway is cofactor metabolism; retinol metabolism. Its function is as follows. Cytosolic dehydrogenase that catalyzes the irreversible oxidation of a wide range of aldehydes to their corresponding carboxylic acid. Functions downstream of retinol dehydrogenases and catalyzes the oxidation of retinaldehyde into retinoic acid, the second step in the oxidation of retinol/vitamin A into retinoic acid. This pathway is crucial to control the levels of retinol and retinoic acid, two important molecules which excess can be teratogenic and cytotoxic. Also oxidizes aldehydes resulting from lipid peroxidation like (E)-4-hydroxynon-2-enal/HNE, malonaldehyde and hexanal that form protein adducts and are highly cytotoxic. By participating for instance to the clearance of (E)-4-hydroxynon-2-enal/HNE in the lens epithelium prevents the formation of HNE-protein adducts and lens opacification. Functions also downstream of fructosamine-3-kinase in the fructosamine degradation pathway by catalyzing the oxidation of 3-deoxyglucosone, the carbohydrate product of fructosamine 3-phosphate decomposition, which is itself a potent glycating agent that may react with lysine and arginine side-chains of proteins. Also has an aminobutyraldehyde dehydrogenase activity and is probably part of an alternative pathway for the biosynthesis of GABA/4-aminobutanoate in midbrain, thereby playing a role in GABAergic synaptic transmission. The polypeptide is Aldehyde dehydrogenase 1A1 (Oryctolagus cuniculus (Rabbit)).